A 161-amino-acid polypeptide reads, in one-letter code: 2-C-methyl-D-erythritol 2,4-cyclodiphosphate synthase (161 aa).

A divalent metal cation-binding residues include Asp-9 and His-11. 4-CDP-2-C-methyl-D-erythritol 2-phosphate contacts are provided by residues 9 to 11 (DFH) and 37 to 38 (HS). His-45 contributes to the a divalent metal cation binding site. 4-CDP-2-C-methyl-D-erythritol 2-phosphate contacts are provided by residues 59 to 61 (DIG), 64 to 68 (FPDTD), 135 to 138 (TTTE), and Arg-145.

Belongs to the IspF family. Homotrimer. The cofactor is a divalent metal cation.

The enzyme catalyses 4-CDP-2-C-methyl-D-erythritol 2-phosphate = 2-C-methyl-D-erythritol 2,4-cyclic diphosphate + CMP. Its pathway is isoprenoid biosynthesis; isopentenyl diphosphate biosynthesis via DXP pathway; isopentenyl diphosphate from 1-deoxy-D-xylulose 5-phosphate: step 4/6. In terms of biological role, involved in the biosynthesis of isopentenyl diphosphate (IPP) and dimethylallyl diphosphate (DMAPP), two major building blocks of isoprenoid compounds. Catalyzes the conversion of 4-diphosphocytidyl-2-C-methyl-D-erythritol 2-phosphate (CDP-ME2P) to 2-C-methyl-D-erythritol 2,4-cyclodiphosphate (ME-CPP) with a corresponding release of cytidine 5-monophosphate (CMP). The chain is 2-C-methyl-D-erythritol 2,4-cyclodiphosphate synthase from Leptospira interrogans serogroup Icterohaemorrhagiae serovar copenhageni (strain Fiocruz L1-130).